The chain runs to 567 residues: Mitogen-activated protein kinase 16 (567 aa).

Positions 25-316 (YRIEEVIGKG…AEEALADVYF (292 aa)) constitute a Protein kinase domain. ATP is bound by residues 31-39 (IGKGSYGVV) and Lys54. Asp151 functions as the Proton acceptor in the catalytic mechanism. At Thr187 the chain carries Phosphothreonine. The TXY motif lies at 187-189 (TDY). Tyr189 carries the post-translational modification Phosphotyrosine. The residue at position 192 (Thr192) is a Phosphothreonine. 2 disordered regions span residues 428-455 (AQQSSAEVTDGLSKCSIRDERPRGADRN) and 512-567 (PAAA…SRWY). Over residues 443–453 (SIRDERPRGAD) the composition is skewed to basic and acidic residues. Positions 545-567 (KPNTQYIPQKVSAAQDTAMSRWY) are enriched in polar residues.

It belongs to the protein kinase superfamily. CMGC Ser/Thr protein kinase family. MAP kinase subfamily. In terms of processing, dually phosphorylated on Thr-187 and Tyr-189, which activates the enzyme.

The enzyme catalyses L-seryl-[protein] + ATP = O-phospho-L-seryl-[protein] + ADP + H(+). It catalyses the reaction L-threonyl-[protein] + ATP = O-phospho-L-threonyl-[protein] + ADP + H(+). With respect to regulation, activated by threonine and tyrosine phosphorylation. The polypeptide is Mitogen-activated protein kinase 16 (MPK16) (Arabidopsis thaliana (Mouse-ear cress)).